The chain runs to 381 residues: Probable envelope ADP,ATP carrier protein, chloroplastic (381 aa).

A chloroplast-targeting transit peptide spans 1–26 (MEEDRAILTFHRIPSLNSSLITTSSP). Helical transmembrane passes span 78 to 98 (LAILALVPKDAAIFAAGALAG), 154 to 179 (LPQVIRVLPYSAVQLLAYESYKNLFK), 191 to 211 (LAAGACAGMTSTLLTYPLDVL), 237 to 257 (IASFYYGLGPSLVGIAPYIAV), and 281 to 301 (LLTAVLSAGIATLTCYPLDTV). Solcar repeat units lie at residues 85–177 (PKDA…YKNL), 185–268 (LSVI…VKKS), and 279–359 (SSLL…VKRL). Arginine 159 contacts ADP. Residue arginine 302 participates in ADP binding. The chain crosses the membrane as a helical span at residues 334–360 (GFLPNALKTLPNSSIRLTTFDMVKRLI).

This sequence belongs to the mitochondrial carrier (TC 2.A.29) family.

It localises to the plastid. The protein resides in the chloroplast membrane. In terms of biological role, transports adenine nucleotides. This is Probable envelope ADP,ATP carrier protein, chloroplastic (EAAC) from Arabidopsis thaliana (Mouse-ear cress).